Consider the following 210-residue polypeptide: Ribosomal RNA small subunit methyltransferase G (210 aa).

Residues Gly76, Leu81, 127–128 (VE), and Arg142 each bind S-adenosyl-L-methionine.

Belongs to the methyltransferase superfamily. RNA methyltransferase RsmG family.

It localises to the cytoplasm. It carries out the reaction guanosine(527) in 16S rRNA + S-adenosyl-L-methionine = N(7)-methylguanosine(527) in 16S rRNA + S-adenosyl-L-homocysteine. Its function is as follows. Specifically methylates the N7 position of guanine in position 527 of 16S rRNA. The sequence is that of Ribosomal RNA small subunit methyltransferase G from Vibrio cholerae serotype O1 (strain ATCC 39315 / El Tor Inaba N16961).